The following is a 272-amino-acid chain: Undecaprenyl-diphosphatase (272 aa).

8 helical membrane-spanning segments follow: residues 4–24 (FEVI…FLPI), 43–63 (GGRV…CWLY), 86–106 (ISVL…VDFI), 109–129 (VLFS…IIFW), 145–165 (ITFK…IPGT), 186–206 (TEFS…FDLI), 222–242 (VGFV…VLFV), and 249–269 (VFAW…MFFN).

The protein belongs to the UppP family.

It is found in the cell inner membrane. It catalyses the reaction di-trans,octa-cis-undecaprenyl diphosphate + H2O = di-trans,octa-cis-undecaprenyl phosphate + phosphate + H(+). In terms of biological role, catalyzes the dephosphorylation of undecaprenyl diphosphate (UPP). Confers resistance to bacitracin. The polypeptide is Undecaprenyl-diphosphatase (Acinetobacter baumannii (strain AB307-0294)).